Consider the following 254-residue polypeptide: MSIITEIQGDLFDAPEGAALIHACNCQGSWGKGIAATFKEKYPAAYRIFRSHCQQYLSHPQTWTQTQTSRQQSRAFKLPEGTALIIPPQPADYQPQPQPQSQTAPLSNCGRGRGRGRGRAGGGALHNSRELTALSRPAGKKHWIICLFTSWHYGRWSRSPPDIILENTMSAMADLKRQIAAAAAASSTTSPATTTTTTTALAATGGCEEEQLGELWGCRLNAGLFEVPWERTKAVLEEAGLAVTIVQPPGSGYE.

The Macro domain maps to 1–254 (MSIITEIQGD…IVQPPGSGYE (254 aa)). Residues 9–11 (GDL), 23–25 (ACN), and 30–35 (WGKGIA) each bind substrate. A disordered region spans residues 86–125 (IPPQPADYQPQPQPQSQTAPLSNCGRGRGRGRGRAGGGAL). The segment covering 91–102 (ADYQPQPQPQSQ) has biased composition (low complexity). Position 220–226 (220–226 (LNAGLFE)) interacts with substrate.

The protein belongs to the POA1 family.

The catalysed reaction is ADP-alpha-D-ribose 1''-phosphate + H2O = ADP-D-ribose + phosphate. Its function is as follows. Highly specific phosphatase involved in the metabolism of ADP-ribose 1''-phosphate (Appr1p) which is produced as a consequence of tRNA splicing. The sequence is that of ADP-ribose 1''-phosphate phosphatase (POA1) from Ajellomyces capsulatus (strain NAm1 / WU24) (Darling's disease fungus).